The sequence spans 72 residues: Large ribosomal subunit protein uL29 (72 aa).

Belongs to the universal ribosomal protein uL29 family.

The chain is Large ribosomal subunit protein uL29 from Thermus thermophilus (strain ATCC BAA-163 / DSM 7039 / HB27).